Consider the following 135-residue polypeptide: Small ribosomal subunit protein bS18 (135 aa).

The interval M1–F65 is disordered. Residues P9–R41 are compositionally biased toward gly residues. The segment covering G42–G61 has biased composition (basic and acidic residues).

This sequence belongs to the bacterial ribosomal protein bS18 family. As to quaternary structure, part of the 30S ribosomal subunit. Forms a tight heterodimer with protein bS6.

Its function is as follows. Binds as a heterodimer with protein bS6 to the central domain of the 16S rRNA, where it helps stabilize the platform of the 30S subunit. The sequence is that of Small ribosomal subunit protein bS18 from Anaeromyxobacter sp. (strain K).